The sequence spans 696 residues: Serine/threonine-protein kinase sck1 (696 aa).

Disordered regions lie at residues 1–59 (MTEI…YDPV) and 77–118 (HKEQ…TPPS). The segment covering 11–37 (SSNSENTNQASPSTIQSHSTQPVLSND) has biased composition (polar residues). 2 stretches are compositionally biased toward basic and acidic residues: residues 38–49 (HSTKVNDYEGKE) and 77–88 (HKEQSLKEDKES). The 151-residue stretch at 122 to 272 (IRHDTVVPKD…VQEAWYKLEP (151 aa)) folds into the C2 domain. A Protein kinase domain is found at 302–563 (FTALRLIGKG…TTELKEHPFF (262 aa)). ATP-binding positions include 308–316 (IGKGTFGQV) and lysine 331. The active-site Proton acceptor is aspartate 428. Positions 564–643 (ADINWDLLSK…VNKSIDEQFQ (80 aa)) constitute an AGC-kinase C-terminal domain. Threonine 632 bears the Phosphothreonine mark. The residue at position 665 (serine 665) is a Phosphoserine.

This sequence belongs to the protein kinase superfamily. AGC Ser/Thr protein kinase family. cAMP subfamily.

The catalysed reaction is L-seryl-[protein] + ATP = O-phospho-L-seryl-[protein] + ADP + H(+). The enzyme catalyses L-threonyl-[protein] + ATP = O-phospho-L-threonyl-[protein] + ADP + H(+). Protein kinase that is part of growth control pathway which is at least partially redundant with the cAMP pathway. Required for trehalase activation. The sequence is that of Serine/threonine-protein kinase sck1 (sck1) from Schizosaccharomyces pombe (strain 972 / ATCC 24843) (Fission yeast).